The sequence spans 207 residues: Guanylate kinase (207 aa).

The region spanning 5 to 184 (GNLFIVSAPS…ALADLVAIIR (180 aa)) is the Guanylate kinase-like domain. Residue 12 to 19 (APSGAGKS) coordinates ATP.

It belongs to the guanylate kinase family.

It localises to the cytoplasm. The enzyme catalyses GMP + ATP = GDP + ADP. Functionally, essential for recycling GMP and indirectly, cGMP. The polypeptide is Guanylate kinase (Shewanella violacea (strain JCM 10179 / CIP 106290 / LMG 19151 / DSS12)).